A 349-amino-acid polypeptide reads, in one-letter code: D-alanine--D-alanine ligase (349 aa).

The 204-residue stretch at K132 to D335 folds into the ATP-grasp domain. Residue V162 to E217 coordinates ATP. Residues D289, E302, and N304 each coordinate Mg(2+).

The protein belongs to the D-alanine--D-alanine ligase family. It depends on Mg(2+) as a cofactor. Requires Mn(2+) as cofactor.

It is found in the cytoplasm. The catalysed reaction is 2 D-alanine + ATP = D-alanyl-D-alanine + ADP + phosphate + H(+). Its pathway is cell wall biogenesis; peptidoglycan biosynthesis. Functionally, cell wall formation. This is D-alanine--D-alanine ligase from Lactococcus lactis subsp. cremoris (strain MG1363).